The chain runs to 756 residues: Polyribonucleotide nucleotidyltransferase (756 aa).

Mg(2+) is bound by residues D547 and D553. The KH domain occupies 613–672 (PRITSVTIPVNKIGELIGPKGKTINAITEETGADVSIEEDGTVYISAATGEAADAAIDRV). Residues 684 to 753 (GERFLGTVVK…NRGKISLVPV (70 aa)) form the S1 motif domain.

This sequence belongs to the polyribonucleotide nucleotidyltransferase family. Requires Mg(2+) as cofactor.

It is found in the cytoplasm. It catalyses the reaction RNA(n+1) + phosphate = RNA(n) + a ribonucleoside 5'-diphosphate. Involved in mRNA degradation. Catalyzes the phosphorolysis of single-stranded polyribonucleotides processively in the 3'- to 5'-direction. In Corynebacterium aurimucosum (strain ATCC 700975 / DSM 44827 / CIP 107346 / CN-1) (Corynebacterium nigricans), this protein is Polyribonucleotide nucleotidyltransferase.